The following is a 293-amino-acid chain: Elongation factor Ts (293 aa).

An involved in Mg(2+) ion dislocation from EF-Tu region spans residues 79–82; sequence TDFV.

This sequence belongs to the EF-Ts family.

The protein resides in the cytoplasm. Functionally, associates with the EF-Tu.GDP complex and induces the exchange of GDP to GTP. It remains bound to the aminoacyl-tRNA.EF-Tu.GTP complex up to the GTP hydrolysis stage on the ribosome. The chain is Elongation factor Ts from Exiguobacterium sibiricum (strain DSM 17290 / CCUG 55495 / CIP 109462 / JCM 13490 / 255-15).